The chain runs to 100 residues: MLDNSRLRIAIQKSGRLSEDSRELLSRCGIKVNLHTQRLIALAENMPIDILRVRDDDIPGLIMNGVVDLGIIGENVLEEELLNRRAQGEDPRHFNPRRLD.

It belongs to the ATP phosphoribosyltransferase family. Long subfamily. In terms of assembly, equilibrium between an active dimeric form, an inactive hexameric form and higher aggregates. Interconversion between the various forms is largely reversible and is influenced by the natural substrates and inhibitors of the enzyme. The cofactor is Mg(2+).

The protein resides in the cytoplasm. It catalyses the reaction 1-(5-phospho-beta-D-ribosyl)-ATP + diphosphate = 5-phospho-alpha-D-ribose 1-diphosphate + ATP. Its pathway is amino-acid biosynthesis; L-histidine biosynthesis; L-histidine from 5-phospho-alpha-D-ribose 1-diphosphate: step 1/9. Feedback inhibited by histidine. Functionally, catalyzes the condensation of ATP and 5-phosphoribose 1-diphosphate to form N'-(5'-phosphoribosyl)-ATP (PR-ATP). Has a crucial role in the pathway because the rate of histidine biosynthesis seems to be controlled primarily by regulation of HisG enzymatic activity. The chain is ATP phosphoribosyltransferase (hisG) from Klebsiella pneumoniae.